The chain runs to 397 residues: Acetate kinase (397 aa).

A Mg(2+)-binding site is contributed by Asn7. Lys14 is an ATP binding site. Arg88 serves as a coordination point for substrate. Asp145 acts as the Proton donor/acceptor in catalysis. ATP contacts are provided by residues 205–209 (HLGNG), 279–281 (DMR), and 326–330 (GIGEN). Glu380 is a binding site for Mg(2+).

It belongs to the acetokinase family. Homodimer. Mg(2+) serves as cofactor. Mn(2+) is required as a cofactor.

It localises to the cytoplasm. It catalyses the reaction acetate + ATP = acetyl phosphate + ADP. It participates in metabolic intermediate biosynthesis; acetyl-CoA biosynthesis; acetyl-CoA from acetate: step 1/2. In terms of biological role, catalyzes the formation of acetyl phosphate from acetate and ATP. Can also catalyze the reverse reaction. This chain is Acetate kinase, found in Campylobacter concisus (strain 13826).